An 83-amino-acid polypeptide reads, in one-letter code: Translational regulator CsrA (83 aa).

It belongs to the CsrA/RsmA family. Homodimer; the beta-strands of each monomer intercalate to form a hydrophobic core, while the alpha-helices form wings that extend away from the core.

The protein resides in the cytoplasm. Functionally, a translational regulator that binds mRNA to regulate translation initiation and/or mRNA stability. Usually binds in the 5'-UTR at or near the Shine-Dalgarno sequence preventing ribosome-binding, thus repressing translation. Its main target seems to be the major flagellin gene, while its function is anatagonized by FliW. This Thermotoga maritima (strain ATCC 43589 / DSM 3109 / JCM 10099 / NBRC 100826 / MSB8) protein is Translational regulator CsrA.